A 284-amino-acid polypeptide reads, in one-letter code: MVVENRLEKEKPAVGMETTVFVHGLPRKEAIELFRKAKKISEEMGFQLAVVGVLKGKIILGMNEDELTIMMNEGSEKIGTREIPIALAKGMNAATTVSATIFLCKRFGIDVVVTGGTGGVHPGGVDISQDLTEMASSRIILVSSGIKSILDVDATFEMLETLEIPVVGFMTDEFPLFFSRKSGKKVKRVENVEEILRIYRTMEELKLEKTLMVLNPVPEEHEVPREEIEHLLENIELKVEGKDVTPYLLRKLVEITGGRTLKANLSLLEENVKLAGKIALALGR.

Glu17 serves as the catalytic Proton donor. Residues Lys77 and Val97 each coordinate substrate. Asp126 contributes to the Mn(2+) binding site. 128–130 (SQD) lines the substrate pocket. Residue Lys147 is the Nucleophile of the active site.

It belongs to the pseudouridine-5'-phosphate glycosidase family. Homotrimer. Mn(2+) serves as cofactor.

It catalyses the reaction D-ribose 5-phosphate + uracil = psi-UMP + H2O. In terms of biological role, catalyzes the reversible cleavage of pseudouridine 5'-phosphate (PsiMP) to ribose 5-phosphate and uracil. Functions biologically in the cleavage direction, as part of a pseudouridine degradation pathway. The chain is Pseudouridine-5'-phosphate glycosidase from Thermotoga neapolitana (strain ATCC 49049 / DSM 4359 / NBRC 107923 / NS-E).